A 336-amino-acid chain; its full sequence is NADH-quinone oxidoreductase subunit H (336 aa).

8 helical membrane passes run 4-24, 75-95, 108-128, 154-174, 181-201, 233-253, 272-292, and 308-328; these read YILW…LVVA, YLFF…WAVI, LGLL…VIAG, MGFA…TGII, LWHW…IAGI, LFFL…SIMF, FVPG…MFLW, and LGWK…ACMV.

The protein belongs to the complex I subunit 1 family. NDH-1 is composed of 14 different subunits. Subunits NuoA, H, J, K, L, M, N constitute the membrane sector of the complex.

It localises to the cell inner membrane. It carries out the reaction a quinone + NADH + 5 H(+)(in) = a quinol + NAD(+) + 4 H(+)(out). Functionally, NDH-1 shuttles electrons from NADH, via FMN and iron-sulfur (Fe-S) centers, to quinones in the respiratory chain. The immediate electron acceptor for the enzyme in this species is believed to be ubiquinone. Couples the redox reaction to proton translocation (for every two electrons transferred, four hydrogen ions are translocated across the cytoplasmic membrane), and thus conserves the redox energy in a proton gradient. This subunit may bind ubiquinone. This Francisella philomiragia subsp. philomiragia (strain ATCC 25017 / CCUG 19701 / FSC 153 / O#319-036) protein is NADH-quinone oxidoreductase subunit H.